Reading from the N-terminus, the 342-residue chain is Ornithine carbamoyltransferase, catabolic (342 aa).

Carbamoyl phosphate is bound by residues 59-62, serine 83, arginine 110, and 137-140; these read STRT and HPTQ. L-ornithine-binding positions include asparagine 169, aspartate 235, and 239 to 240; that span reads SL. Carbamoyl phosphate is bound by residues 276 to 277 and arginine 328; that span reads CL.

It belongs to the aspartate/ornithine carbamoyltransferase superfamily. OTCase family. In terms of assembly, dodecamer (tetramer of trimers).

It is found in the cytoplasm. It carries out the reaction carbamoyl phosphate + L-ornithine = L-citrulline + phosphate + H(+). It functions in the pathway amino-acid degradation; L-arginine degradation via ADI pathway; carbamoyl phosphate from L-arginine: step 2/2. Nvolved in the catabolism of arginine. Catalyzes the phosphorolysis of citrulline, the reverse reaction of the biosynthetic one, yielding ornithine and carbamoyl phosphate which serve to generate ATP from ADP. This chain is Ornithine carbamoyltransferase, catabolic (arcB), found in Malacoplasma penetrans (strain HF-2) (Mycoplasma penetrans).